A 512-amino-acid chain; its full sequence is Lysine--tRNA ligase (512 aa).

2 residues coordinate Mg(2+): E408 and E415.

The protein belongs to the class-II aminoacyl-tRNA synthetase family. Homodimer. Mg(2+) serves as cofactor.

The protein resides in the cytoplasm. The catalysed reaction is tRNA(Lys) + L-lysine + ATP = L-lysyl-tRNA(Lys) + AMP + diphosphate. The chain is Lysine--tRNA ligase from Prochlorococcus marinus (strain MIT 9312).